The chain runs to 663 residues: tRNA (guanine(26)-N(2))-dimethyltransferase (663 aa).

The transit peptide at 1 to 16 (MSLARTILWLSRPLRP) directs the protein to the mitochondrion. Residues 56 to 498 (ATVTEGAAKI…APPEALWDIM (443 aa)) enclose the Trm1 methyltransferase domain. Arg-83 lines the S-adenosyl-L-methionine pocket. Residue Ser-121 is modified to Phosphoserine. S-adenosyl-L-methionine contacts are provided by Arg-165 and Asp-183. 4 residues coordinate Zn(2+): Cys-347, Cys-350, Cys-383, and Cys-386. Ser-516 is subject to Phosphoserine. The interval 534–574 (IREDANPSSRQRGLKRFQANPEANWGPRPRARPGGKAASED) is disordered. A Nuclear localization signal motif is present at residues 540–572 (PSSRQRGLKRFQANPEANWGPRPRARPGGKAAS). The C3H1-type zinc finger occupies 599-626 (RLKTFPCKRFKEGTCQLGDQCCYSHSPA). A Phosphoserine modification is found at Ser-624. Positions 632-663 (GDIPIEECPETTTKISPGPKAAAGGIPGPGVD) are disordered.

The protein belongs to the class I-like SAM-binding methyltransferase superfamily. Trm1 family.

It localises to the mitochondrion. It is found in the nucleus. The protein resides in the cytoplasm. The enzyme catalyses guanosine(26) in tRNA + 2 S-adenosyl-L-methionine = N(2)-dimethylguanosine(26) in tRNA + 2 S-adenosyl-L-homocysteine + 2 H(+). Functionally, dimethylates a single guanine residue at position 26 of most nuclear- and mitochondrial-encoded tRNAs using S-adenosyl-L-methionine as donor of the methyl groups. tRNA guanine(26)-dimethylation is required for redox homeostasis and ensure proper cellular proliferation and oxidative stress survival. The protein is tRNA (guanine(26)-N(2))-dimethyltransferase of Mus musculus (Mouse).